Consider the following 260-residue polypeptide: Triosephosphate isomerase (260 aa).

11-13 (NWK) provides a ligand contact to substrate. H103 acts as the Electrophile in catalysis. The active-site Proton acceptor is E175. Residues G181, S220, and 241 to 242 (GG) contribute to the substrate site.

The protein belongs to the triosephosphate isomerase family. In terms of assembly, homodimer.

The protein resides in the cytoplasm. It carries out the reaction D-glyceraldehyde 3-phosphate = dihydroxyacetone phosphate. It functions in the pathway carbohydrate biosynthesis; gluconeogenesis. Its pathway is carbohydrate degradation; glycolysis; D-glyceraldehyde 3-phosphate from glycerone phosphate: step 1/1. In terms of biological role, involved in the gluconeogenesis. Catalyzes stereospecifically the conversion of dihydroxyacetone phosphate (DHAP) to D-glyceraldehyde-3-phosphate (G3P). This is Triosephosphate isomerase from Shewanella frigidimarina (strain NCIMB 400).